Reading from the N-terminus, the 159-residue chain is Phosphopantetheine adenylyltransferase (159 aa).

S9 lines the substrate pocket. ATP-binding positions include 9–10 (SF) and H17. Positions 41, 73, and 87 each coordinate substrate. Residues 88-90 (GLR), E98, and 123-129 (NIHISSS) contribute to the ATP site.

This sequence belongs to the bacterial CoaD family. As to quaternary structure, homohexamer. Mg(2+) is required as a cofactor.

It is found in the cytoplasm. It catalyses the reaction (R)-4'-phosphopantetheine + ATP + H(+) = 3'-dephospho-CoA + diphosphate. It functions in the pathway cofactor biosynthesis; coenzyme A biosynthesis; CoA from (R)-pantothenate: step 4/5. Its function is as follows. Reversibly transfers an adenylyl group from ATP to 4'-phosphopantetheine, yielding dephospho-CoA (dPCoA) and pyrophosphate. The polypeptide is Phosphopantetheine adenylyltransferase (Clostridium beijerinckii (strain ATCC 51743 / NCIMB 8052) (Clostridium acetobutylicum)).